Here is a 116-residue protein sequence, read N- to C-terminus: Large ribosomal subunit protein uL22c (116 aa).

The protein belongs to the universal ribosomal protein uL22 family. In terms of assembly, part of the 50S ribosomal subunit.

It localises to the plastid. The protein localises to the chloroplast. Its function is as follows. This protein binds specifically to 23S rRNA. The globular domain of the protein is located near the polypeptide exit tunnel on the outside of the subunit, while an extended beta-hairpin is found that lines the wall of the exit tunnel in the center of the 70S ribosome. This Euglena gracilis protein is Large ribosomal subunit protein uL22c (rpl22).